The sequence spans 1162 residues: Leptin receptor (1162 aa).

Residues 1–21 form the signal peptide; sequence MMCQKFYVVLLHWEFLYVIAA. At 22-839 the chain is on the extracellular side; the sequence is LNLAYPISPW…AIDKQQNDAG (818 aa). Disulfide bonds link C37-C90, C89-C99, C131-C142, C186-C195, and C188-C193. Residues N41, N56, N73, and N98 are each glycosylated (N-linked (GlcNAc...) asparagine). The N-linked (GlcNAc...) asparagine glycan is linked to N187. Positions 238-331 constitute a Fibronectin type-III 1 domain; the sequence is PPLGLHMEVT…SPQVFTTQDV (94 aa). 2 N-linked (GlcNAc...) asparagine glycosylation sites follow: N275 and N345. The Ig-like domain occupies 329-427; it reads QDVVYFPPKI…HRYAELYVID (99 aa). Intrachain disulfides connect C350–C410 and C411–C416. The N-linked (GlcNAc...) asparagine glycan is linked to N431. 3 disulfide bridges follow: C434–C445, C471–C526, and C486–C496. Residues 465–482 form a leptin-binding region; it reads HRRSLYCPDSPSIHPTSE. N514, N622, N657, N668, N686, N695, N698, and N726 each carry an N-linked (GlcNAc...) asparagine glycan. Fibronectin type-III domains follow at residues 537-632, 637-729, and 738-832; these read PPSN…TLVM, PMRG…NLTF, and AVES…DAID. The WSXWS motif signature appears at 620–624; sequence WSNWS. A helical transmembrane segment spans residues 840–860; sequence LYVIVPIIISSCVLLLGTLLI. Topologically, residues 861 to 1162 are cytoplasmic; that stretch reads SHQRMKKLFW…MENKMCDLTV (302 aa). The Box 1 motif signature appears at 869–877; sequence FWDDVPNPK. The residue at position 880 (S880) is a Phosphoserine. The segment at 891 to 896 is required for JAK2 activation; sequence ETFEHL. The interval 896-904 is required for STAT3 phosphorylation; that stretch reads LFTKHAESV. Y985 carries the phosphotyrosine; by JAK2 modification. Y1077 is modified (phosphotyrosine). Y1138 is subject to Phosphotyrosine; by JAK2.

It belongs to the type I cytokine receptor family. Type 2 subfamily. As to quaternary structure, present as a mixture of monomers and dimers. The phosphorylated receptor binds a number of SH2 domain-containing proteins such as JAK2, STAT3, PTPN11, and SOCS3. Interaction with SOCS3 inhibits JAK/STAT signaling and MAPK cascade. On ligand binding, phosphorylated on two conserved C-terminal tyrosine residues (isoform B only) by JAK2. Tyr-985 is required for complete binding and activation of PTPN11, ERK/FOS activation,for interaction with SOCS3 and SOCS3 mediated inhibition of leptin signaling. Phosphorylation on Tyr-1138 is required for STAT3 binding/activation. Phosphorylation of Tyr-1077 has a more accessory role. In terms of tissue distribution, isoform A: highest level of expression in lung and kidney, also present in heart, brain, spleen, liver, muscle, choroid plexus and hypothalamus. Isoform B: highest levels of expression in hypothalamus and lower levels in brain, testes and adipose tissue. Expressed by neurons of the parabrachial nucleus. Expressed by peripheral blood mononuclear cells and CD4(+) T-cells. Isoform E: expressed in adipose tissue, liver, hypothalamus, cerebral microvessels, heart, and testes.

It is found in the cell membrane. The protein localises to the basolateral cell membrane. It localises to the secreted. Its function is as follows. Receptor for hormone LEP/leptin. On ligand binding, mediates LEP central and peripheral effects through the activation of different signaling pathways such as JAK2/STAT3 and MAPK cascade/FOS. In the hypothalamus, LEP acts as an appetite-regulating factor that induces a decrease in food intake and an increase in energy consumption by inducing anorexinogenic factors and suppressing orexigenic neuropeptides, also regulates bone mass and secretion of hypothalamo-pituitary-adrenal hormones. In the periphery, increases basal metabolism, influences reproductive function, regulates pancreatic beta-cell function and insulin secretion, is pro-angiogenic and affects innate and adaptive immunity. Control of energy homeostasis and melanocortin production (stimulation of POMC and full repression of AgRP transcription) is mediated by STAT3 signaling, whereas distinct signals regulate NPY and the control of fertility, growth and glucose homeostasis. Involved in the regulation of counter-regulatory response to hypoglycemia by inhibiting neurons of the parabrachial nucleus. Has a specific effect on T lymphocyte responses, differentially regulating the proliferation of naive and memory T-cells. Leptin increases Th1 and suppresses Th2 cytokine production. May transport LEP across the blood-brain barrier. Binds LEP and mediates LEP endocytosis. Does not induce phosphorylation of and activate STAT3. Functionally, antagonizes Isoform A and isoform B-mediated LEP binding and endocytosis. The protein is Leptin receptor (Lepr) of Mus musculus (Mouse).